The sequence spans 545 residues: Glucose-6-phosphate isomerase (545 aa).

Residue Glu-351 is the Proton donor of the active site. Residues His-382 and Lys-510 contribute to the active site.

The protein belongs to the GPI family.

The protein localises to the cytoplasm. It catalyses the reaction alpha-D-glucose 6-phosphate = beta-D-fructose 6-phosphate. It functions in the pathway carbohydrate biosynthesis; gluconeogenesis. It participates in carbohydrate degradation; glycolysis; D-glyceraldehyde 3-phosphate and glycerone phosphate from D-glucose: step 2/4. Functionally, catalyzes the reversible isomerization of glucose-6-phosphate to fructose-6-phosphate. This is Glucose-6-phosphate isomerase from Helicobacter pylori (strain G27).